We begin with the raw amino-acid sequence, 1147 residues long: Multiple epidermal growth factor-like domains protein 10 (1147 aa).

The signal sequence occupies residues methionine 1–serine 25. Residues methionine 1 to glycine 857 are necessary for interaction with AP2M1, self-assembly and formation of the irregular, mosaic-like adhesion pattern. Residues leucine 26–glycine 857 are Extracellular-facing. In terms of domain architecture, EMI spans aspartate 30–proline 107. Cystine bridges form between cysteine 34–cysteine 95, cysteine 60–cysteine 69, cysteine 94–cysteine 105, cysteine 109–cysteine 124, cysteine 126–cysteine 135, cysteine 148–cysteine 160, cysteine 154–cysteine 167, cysteine 169–cysteine 178, cysteine 191–cysteine 203, cysteine 197–cysteine 210, cysteine 212–cysteine 221, cysteine 234–cysteine 246, cysteine 240–cysteine 253, cysteine 255–cysteine 264, cysteine 281–cysteine 289, cysteine 283–cysteine 296, cysteine 298–cysteine 307, cysteine 320–cysteine 332, cysteine 326–cysteine 339, cysteine 341–cysteine 350, cysteine 409–cysteine 421, cysteine 415–cysteine 428, cysteine 430–cysteine 439, cysteine 456–cysteine 464, cysteine 458–cysteine 471, cysteine 473–cysteine 482, cysteine 495–cysteine 507, cysteine 501–cysteine 514, cysteine 516–cysteine 525, cysteine 542–cysteine 550, cysteine 544–cysteine 557, cysteine 559–cysteine 568, cysteine 581–cysteine 593, cysteine 587–cysteine 600, cysteine 602–cysteine 611, cysteine 669–cysteine 681, cysteine 675–cysteine 688, cysteine 690–cysteine 699, cysteine 716–cysteine 724, cysteine 718–cysteine 731, cysteine 733–cysteine 742, cysteine 755–cysteine 767, cysteine 761–cysteine 774, cysteine 776–cysteine 785, cysteine 802–cysteine 810, cysteine 804–cysteine 817, and cysteine 819–cysteine 828. 15 EGF-like domains span residues serine 101–serine 136, tryptophan 144–glutamate 179, tyrosine 187–glutamate 222, histidine 230–glycine 265, serine 278–glutamine 308, tyrosine 316–glutamate 351, tyrosine 405–serine 440, serine 453–serine 483, tryptophan 491–glutamate 526, alanine 539–aspartate 569, tryptophan 577–glutamine 612, phenylalanine 665–serine 700, isoleucine 713–threonine 743, tyrosine 751–glutamate 786, and arginine 799–aspartate 829. Asparagine 134 carries an N-linked (GlcNAc...) asparagine glycan. An N-linked (GlcNAc...) asparagine glycan is attached at asparagine 496. Residues alanine 858–isoleucine 878 form a helical membrane-spanning segment. At tyrosine 879–glutamate 1147 the chain is on the cytoplasmic side. The necessary for formation of large intracellular vacuoles stretch occupies residues arginine 945–glutamate 1147. Phosphotyrosine is present on tyrosine 1030. The disordered stretch occupies residues histidine 1093–glutamate 1147. Low complexity predominate over residues asparagine 1132–glutamate 1147.

This sequence belongs to the MEGF family. As to quaternary structure, homomer. Interacts with GULP1 and ABCA1. Interacts with AP2M1. Does not interact with MEGF11. Binds with high affinity to complement C1q. Interacts (via the cytoplasmic domain) with NOTCH1 (via NICD domain). In terms of processing, ubiquitinated; mono- and polyubiquitinated forms are detected. Post-translationally, phosphorylated on tyrosine residues. Phosphorylation at Tyr-1030 may be important for muscle cell proliferation. Expressed in cerebellum (at protein level). Expressed in kidney, stellate cells of the cerebellum and macrophage cell lines.

It is found in the cell membrane. It localises to the cell projection. Its subcellular location is the phagocytic cup. Its function is as follows. Membrane receptor involved in phagocytosis by macrophages and astrocytes of apoptotic cells. Receptor for C1q, an eat-me signal, that binds phosphatidylserine expressed on the surface of apoptotic cells. Cooperates with ABCA1 within the process of engulfment. Promotes the formation of large intracellular vacuoles and may be responsible for the uptake of amyloid-beta peptides. Necessary for astrocyte-dependent apoptotic neuron clearance in the developing cerebellum. Plays a role in muscle cell proliferation, adhesion and motility. Is also an essential factor in the regulation of myogenesis. Controls the balance between skeletal muscle satellite cells proliferation and differentiation through regulation of the notch signaling pathway. May also function in the mosaic spacing of specific neuron subtypes in the retina through homotypic retinal neuron repulsion. Mosaics provide a mechanism to distribute each cell type evenly across the retina, ensuring that all parts of the visual field have access to a full set of processing elements. The chain is Multiple epidermal growth factor-like domains protein 10 from Mus musculus (Mouse).